The sequence spans 300 residues: 4-hydroxy-tetrahydrodipicolinate synthase (300 aa).

Pyruvate is bound at residue Thr46. Catalysis depends on Tyr135, which acts as the Proton donor/acceptor. The active-site Schiff-base intermediate with substrate is Lys163. Val205 contacts pyruvate.

Belongs to the DapA family. In terms of assembly, homotetramer; dimer of dimers.

Its subcellular location is the cytoplasm. It catalyses the reaction L-aspartate 4-semialdehyde + pyruvate = (2S,4S)-4-hydroxy-2,3,4,5-tetrahydrodipicolinate + H2O + H(+). The protein operates within amino-acid biosynthesis; L-lysine biosynthesis via DAP pathway; (S)-tetrahydrodipicolinate from L-aspartate: step 3/4. Catalyzes the condensation of (S)-aspartate-beta-semialdehyde [(S)-ASA] and pyruvate to 4-hydroxy-tetrahydrodipicolinate (HTPA). In Koribacter versatilis (strain Ellin345), this protein is 4-hydroxy-tetrahydrodipicolinate synthase.